Reading from the N-terminus, the 207-residue chain is Large ribosomal subunit protein uL4 (207 aa).

The interval 50–76 (KTKTVSEVSGTTKKPFKQKGTGNARQG) is disordered.

This sequence belongs to the universal ribosomal protein uL4 family. In terms of assembly, part of the 50S ribosomal subunit.

One of the primary rRNA binding proteins, this protein initially binds near the 5'-end of the 23S rRNA. It is important during the early stages of 50S assembly. It makes multiple contacts with different domains of the 23S rRNA in the assembled 50S subunit and ribosome. Functionally, forms part of the polypeptide exit tunnel. This chain is Large ribosomal subunit protein uL4, found in Rickettsia canadensis (strain McKiel).